A 161-amino-acid polypeptide reads, in one-letter code: MSSFVTNGYLPVTLEPHELTLDIKTNIRNAVYKTYLHREISGKMAKKIEIREDVELPLGEIVNNSVVINVPCVITYAYYHVGDIVRGTLNIEDESNVTIQCGDLICKLSRDSGTVSFSDSKYCFFRNGNAYDNGSEVTAVLMEAQQGIESSFVFLANIVDS.

This sequence belongs to the poxviridae DNA-directed RNA polymerase 18 kDa subunit family. In terms of assembly, the DNA-dependent RNA polymerase used for intermediate and late genes expression consists of eight subunits Rpo30/OPG66, Rpo7/OPG90, Rpo22/OPG103, Rpo147/OPG105, Rpo18/OPG119, Rpo19/OPG131, Rpo132/OPG151 and Rpo35/OPG156. The same holoenzyme, with the addition of the transcription-specificity factor OPG109, is used for early gene expression.

The protein resides in the virion. The catalysed reaction is RNA(n) + a ribonucleoside 5'-triphosphate = RNA(n+1) + diphosphate. Its function is as follows. Part of the DNA-dependent RNA polymerase which catalyzes the transcription of viral DNA into RNA using the four ribonucleoside triphosphates as substrates. Responsible for the transcription of early, intermediate and late genes. DNA-dependent RNA polymerase associates with the early transcription factor (ETF), itself composed of OPG118 and OPG133, thereby allowing the early genes transcription. Late transcription, and probably also intermediate transcription, require newly synthesized RNA polymerase. The protein is DNA-directed RNA polymerase 18 kDa subunit (OPG119) of Vaccinia virus (strain Ankara) (VACV).